Consider the following 458-residue polypeptide: Phosphomethylpyrimidine synthase (458 aa).

Residues Asn80, Met109, Tyr139, His175, Ser195–Gly197, Asp236–Arg239, and Glu275 contribute to the substrate site. Residue His279 coordinates Zn(2+). Residue Tyr302 coordinates substrate. Residue His343 coordinates Zn(2+). Cys423, Cys426, and Cys431 together coordinate [4Fe-4S] cluster.

This sequence belongs to the ThiC family. [4Fe-4S] cluster serves as cofactor.

The enzyme catalyses 5-amino-1-(5-phospho-beta-D-ribosyl)imidazole + S-adenosyl-L-methionine = 4-amino-2-methyl-5-(phosphooxymethyl)pyrimidine + CO + 5'-deoxyadenosine + formate + L-methionine + 3 H(+). It functions in the pathway cofactor biosynthesis; thiamine diphosphate biosynthesis. Functionally, catalyzes the synthesis of the hydroxymethylpyrimidine phosphate (HMP-P) moiety of thiamine from aminoimidazole ribotide (AIR) in a radical S-adenosyl-L-methionine (SAM)-dependent reaction. The protein is Phosphomethylpyrimidine synthase of Acaryochloris marina (strain MBIC 11017).